We begin with the raw amino-acid sequence, 365 residues long: Chorismate synthase (365 aa).

Arginine 46 lines the NADP(+) pocket. Residues 124-126 (RAS), glycine 284, 299-303 (KPTPS), and arginine 326 contribute to the FMN site.

This sequence belongs to the chorismate synthase family. Requires FMNH2 as cofactor.

The enzyme catalyses 5-O-(1-carboxyvinyl)-3-phosphoshikimate = chorismate + phosphate. It functions in the pathway metabolic intermediate biosynthesis; chorismate biosynthesis; chorismate from D-erythrose 4-phosphate and phosphoenolpyruvate: step 7/7. Catalyzes the anti-1,4-elimination of the C-3 phosphate and the C-6 proR hydrogen from 5-enolpyruvylshikimate-3-phosphate (EPSP) to yield chorismate, which is the branch point compound that serves as the starting substrate for the three terminal pathways of aromatic amino acid biosynthesis. This reaction introduces a second double bond into the aromatic ring system. The chain is Chorismate synthase from Pyrobaculum islandicum (strain DSM 4184 / JCM 9189 / GEO3).